The following is a 73-amino-acid chain: Large ribosomal subunit protein bL27c (73 aa).

Belongs to the bacterial ribosomal protein bL27 family.

The protein resides in the plastid. Its subcellular location is the chloroplast. In Chrysochromulina alifera (Plankton alga), this protein is Large ribosomal subunit protein bL27c (rpl27).